The following is a 1369-amino-acid chain: Serine/threonine-protein kinase SIK3 (1369 aa).

Positions 26 to 55 (LLPPPAAGPPAAPAAVPPAAVPARPTAPAS) are disordered. Pro residues predominate over residues 27-45 (LPPPAAGPPAAPAAVPPAA). The segment covering 46 to 55 (VPARPTAPAS) has biased composition (low complexity). Residues 66–317 (YEIDRTIGKG…MEQICRHKWM (252 aa)) enclose the Protein kinase domain. Threonine 71 is modified (phosphothreonine). ATP-binding positions include 72-80 (IGKGNFAVV) and lysine 95. Catalysis depends on aspartate 188, which acts as the Proton acceptor. Position 221 is a phosphothreonine (threonine 221). Residues 344–384 (PLNDDVLLAMEDMGLDKERTLQSLRSDAYDHYSAIYSLLCD) enclose the UBA domain. Threonine 469 carries the phosphothreonine modification. A phosphoserine mark is found at serine 551, serine 591, serine 592, serine 674, and serine 695. Positions 775–821 (IQPSSPPPNHPSNHLFRQPSNSPPPVSSAMITSHGATSPSQFQGLPS) are disordered. Polar residues predominate over residues 803 to 818 (AMITSHGATSPSQFQG). A Phosphoserine modification is found at serine 914. The disordered stretch occupies residues 942 to 993 (LFSDQSRGSPSSYSPSTGVGFPPTQALKVPPLDQFPTFPPSAQQQPPHYTTS). Residues 944–957 (SDQSRGSPSSYSPS) are compositionally biased toward low complexity. Polar residues predominate over residues 981–993 (PSAQQQPPHYTTS). At serine 1026 the chain carries Phosphoserine. Arginine 1034 bears the Omega-N-methylarginine mark. Residues 1314–1338 (DEEDEECGVSLGHEHPGLGDGSQHL) form a disordered region.

It belongs to the protein kinase superfamily. CAMK Ser/Thr protein kinase family. SNF1 subfamily. In terms of assembly, binds to and is activated by YWHAZ when phosphorylated on Thr-221. Interacts with 14-3-3 proteins. Interacts with HDAC4; this interaction leads to HDAC4 retention in the cytoplasm. Interacts with DEPTOR, MLST8/GbetaL, RICTOR and RPTOR. Mg(2+) is required as a cofactor. Phosphorylated at Thr-221 by STK11/LKB1 in complex with STE20-related adapter-alpha (STRADA) pseudo kinase and CAB39. As to expression, expressed in hypertrophic chondrocytes in the growth plate.

The protein resides in the cytoplasm. The catalysed reaction is L-seryl-[protein] + ATP = O-phospho-L-seryl-[protein] + ADP + H(+). The enzyme catalyses L-threonyl-[protein] + ATP = O-phospho-L-threonyl-[protein] + ADP + H(+). With respect to regulation, activated by phosphorylation on Thr-221. Its function is as follows. Positive regulator of mTOR signaling that functions by triggering the degradation of DEPTOR, an mTOR inhibitor. Required for chondrocyte hypertrophy during skeletogenesis. Negatively regulates cAMP signaling pathway possibly by acting on CRTC2/TORC2 and CRTC3/TORC3. Prevents HDAC4 translocation to the nucleus. This is Serine/threonine-protein kinase SIK3 (Sik3) from Mus musculus (Mouse).